A 194-amino-acid polypeptide reads, in one-letter code: Isopentenyl-diphosphate Delta-isomerase (194 aa).

The Mn(2+) site is built by His-35 and His-42. Positions 40–174 constitute a Nudix hydrolase domain; that stretch reads PLHLAFSSYL…PWALSPWSVD (135 aa). Cys-77 is a catalytic residue. A Mn(2+)-binding site is contributed by His-79. Position 97 (Glu-97) interacts with Mg(2+). Mn(2+) contacts are provided by Glu-124 and Glu-126. Residue Glu-126 is part of the active site.

The protein belongs to the IPP isomerase type 1 family. Requires Mg(2+) as cofactor. It depends on Mn(2+) as a cofactor.

Its subcellular location is the cytoplasm. The catalysed reaction is isopentenyl diphosphate = dimethylallyl diphosphate. It functions in the pathway isoprenoid biosynthesis; dimethylallyl diphosphate biosynthesis; dimethylallyl diphosphate from isopentenyl diphosphate: step 1/1. In terms of biological role, catalyzes the 1,3-allylic rearrangement of the homoallylic substrate isopentenyl (IPP) to its highly electrophilic allylic isomer, dimethylallyl diphosphate (DMAPP). This is Isopentenyl-diphosphate Delta-isomerase from Frankia alni (strain DSM 45986 / CECT 9034 / ACN14a).